A 456-amino-acid chain; its full sequence is Serine--tRNA ligase (456 aa).

The tract at residues 49-69 (HERNEVSSTIGELKQAGEEEA) is disordered. An L-serine-binding site is contributed by 241 to 243 (TAE). ATP is bound by residues 272-274 (RQE) and valine 288. Residue glutamate 295 coordinates L-serine. 368–371 (EVSS) contacts ATP. Residue serine 404 participates in L-serine binding.

Belongs to the class-II aminoacyl-tRNA synthetase family. Type-1 seryl-tRNA synthetase subfamily. Homodimer. The tRNA molecule binds across the dimer.

Its subcellular location is the cytoplasm. It catalyses the reaction tRNA(Ser) + L-serine + ATP = L-seryl-tRNA(Ser) + AMP + diphosphate + H(+). It carries out the reaction tRNA(Sec) + L-serine + ATP = L-seryl-tRNA(Sec) + AMP + diphosphate + H(+). It functions in the pathway aminoacyl-tRNA biosynthesis; selenocysteinyl-tRNA(Sec) biosynthesis; L-seryl-tRNA(Sec) from L-serine and tRNA(Sec): step 1/1. Catalyzes the attachment of serine to tRNA(Ser). Is also able to aminoacylate tRNA(Sec) with serine, to form the misacylated tRNA L-seryl-tRNA(Sec), which will be further converted into selenocysteinyl-tRNA(Sec). This Halorubrum lacusprofundi (strain ATCC 49239 / DSM 5036 / JCM 8891 / ACAM 34) protein is Serine--tRNA ligase.